The chain runs to 239 residues: Terpene cyclase idtB (239 aa).

5 helical membrane-spanning segments follow: residues 20-40 (MADTFVAGMGLGWIVNYALMI), 50-70 (CMALLPLCNNIAWELTYTIVY), 75-95 (RVELLVFAIGLTLNFFIMVGA), 113-133 (AGFILLVGTLLCFTGHVALAM), and 138-158 (GLAYSWGAVVCQLALSIGGLF). Asparagine 164 is a glycosylation site (N-linked (GlcNAc...) asparagine). Residues 197–217 (EVFGWLASPLVLWSLVTFLLA) form a helical membrane-spanning segment.

The protein belongs to the paxB family.

The protein localises to the membrane. It functions in the pathway secondary metabolite biosynthesis. Functionally, terpene cyclase; part of the gene cluster that mediates the biosynthesis of paspalitrems, indole-diterpene (IDT) mycotoxins that are potent tremorgens in mammals. The geranylgeranyl diphosphate (GGPP) synthase idtG is proposed to catalyze the first step in IDT biosynthesis via catalysis of a series of iterative condensations of isopentenyl diphosphate (IPP) with dimethylallyl diphosphate (DMAPP), geranyl diphosphate (GPP), and farnesyl diphosphate (FPP), to form GGPP. Condensation of indole-3-glycerol phosphate with GGPP by the prenyltransferase idtC then forms 3-geranylgeranylindole (3-GGI). Epoxidation of the two terminal alkenes of the geranylgeranyl moiety by the FAD-dependent monooxygenase idtM, and cyclization by the terpene cyclase idtB then leads to the production of paspaline. The cytochrome P450 monooxygenase idtP then catalyzes oxidative elimination of the pendant methyl group at C-12 of paspaline and generates the C-10 ketone to yield 13-desoxypaxilline. The cytochrome P450 monooxygenase idtQ may catalyze the C-13 oxidation of 13-desoxypaxilline to afford paxilline. Considering that both paspalicine and paxilline were detected in C.paspali, idtQ also catalyzes the formation of paspalinine from 13-desoxypaxilline via paspalicine as an intermediate. Finally, the alpha-prenyltransferase idtF prenylates paspalinine at the C-20 or the C-21 positions to yield paspalitrems A and C, respectively. The hydroxylation of paspalitrem A at C-32 by a still unknown oxidase affords paspalitrem B. The sequence is that of Terpene cyclase idtB from Claviceps paspali (Rye ergot fungus).